A 216-amino-acid polypeptide reads, in one-letter code: Small ribosomal subunit protein uS3c (216 aa).

In terms of domain architecture, KH type-2 spans Ile43 to Ala116.

The protein belongs to the universal ribosomal protein uS3 family. Part of the 30S ribosomal subunit.

It is found in the plastid. The protein resides in the chloroplast. This is Small ribosomal subunit protein uS3c (rps3) from Drimys granadensis.